We begin with the raw amino-acid sequence, 164 residues long: 16S rRNA aminocarboxypropyltransferase (164 aa).

Thr-18, Ile-66, Leu-87, and Ser-106 together coordinate S-adenosyl-L-methionine.

Belongs to the TDD superfamily. TSR3 family.

The protein localises to the cytoplasm. The enzyme catalyses an N(1)-methylpseudouridine in rRNA + S-adenosyl-L-methionine = N(1)-methyl-N(3)-[(3S)-3-amino-3-carboxypropyl]pseudouridine in rRNA + S-methyl-5'-thioadenosine + H(+). Functionally, aminocarboxypropyltransferase that catalyzes the aminocarboxypropyl transfer on pseudouridine corresponding to position 914 in M.jannaschii 16S rRNA. It constitutes the last step in biosynthesis of the hypermodified N1-methyl-N3-(3-amino-3-carboxypropyl) pseudouridine (m1acp3-Psi). The sequence is that of 16S rRNA aminocarboxypropyltransferase from Thermoplasma volcanium (strain ATCC 51530 / DSM 4299 / JCM 9571 / NBRC 15438 / GSS1).